Consider the following 545-residue polypeptide: Chaperonin GroEL 1 (545 aa).

ATP contacts are provided by residues 29-32 (TLGP), 86-90 (DGTTT), glycine 413, 477-479 (NAA), and aspartate 493.

Belongs to the chaperonin (HSP60) family. As to quaternary structure, forms a cylinder of 14 subunits composed of two heptameric rings stacked back-to-back. Interacts with the co-chaperonin GroES.

The protein localises to the cytoplasm. It catalyses the reaction ATP + H2O + a folded polypeptide = ADP + phosphate + an unfolded polypeptide.. Functionally, together with its co-chaperonin GroES, plays an essential role in assisting protein folding. The GroEL-GroES system forms a nano-cage that allows encapsulation of the non-native substrate proteins and provides a physical environment optimized to promote and accelerate protein folding. In Arthrobacter sp. (strain FB24), this protein is Chaperonin GroEL 1.